A 131-amino-acid chain; its full sequence is Small ribosomal subunit protein uS9 (131 aa).

This sequence belongs to the universal ribosomal protein uS9 family.

The chain is Small ribosomal subunit protein uS9 from Actinobacillus succinogenes (strain ATCC 55618 / DSM 22257 / CCUG 43843 / 130Z).